A 451-amino-acid polypeptide reads, in one-letter code: tRNA-2-methylthio-N(6)-dimethylallyladenosine synthase (451 aa).

The region spanning 2–119 (QNLYIKTYGC…LPDLLDACLA (118 aa)) is the MTTase N-terminal domain. [4Fe-4S] cluster contacts are provided by Cys11, Cys48, Cys82, Cys157, Cys161, and Cys164. In terms of domain architecture, Radical SAM core spans 143–377 (GRDGATAFVT…RINGLAQGYA (235 aa)). One can recognise a TRAM domain in the interval 378–441 (QALVGTQQAV…PNSLRGRAAL (64 aa)).

This sequence belongs to the methylthiotransferase family. MiaB subfamily. As to quaternary structure, monomer. It depends on [4Fe-4S] cluster as a cofactor.

It localises to the cytoplasm. The enzyme catalyses N(6)-dimethylallyladenosine(37) in tRNA + (sulfur carrier)-SH + AH2 + 2 S-adenosyl-L-methionine = 2-methylsulfanyl-N(6)-dimethylallyladenosine(37) in tRNA + (sulfur carrier)-H + 5'-deoxyadenosine + L-methionine + A + S-adenosyl-L-homocysteine + 2 H(+). Functionally, catalyzes the methylthiolation of N6-(dimethylallyl)adenosine (i(6)A), leading to the formation of 2-methylthio-N6-(dimethylallyl)adenosine (ms(2)i(6)A) at position 37 in tRNAs that read codons beginning with uridine. The chain is tRNA-2-methylthio-N(6)-dimethylallyladenosine synthase from Acidithiobacillus ferrooxidans (strain ATCC 23270 / DSM 14882 / CIP 104768 / NCIMB 8455) (Ferrobacillus ferrooxidans (strain ATCC 23270)).